Consider the following 635-residue polypeptide: MIKITLKDGKVMEFEEGIKISDIAMKISPALYKKALAAKIDGETMDLMTELHKDSSLEILTFEDEMGKWALRHTGAHILAQAVKRLYPEVKLAIGPAIDTGFYYDFEADFTFTPEILEKIEAEIKKIIKENHKLERFELPREEAINLMKENNEDYKVELIEDLPEGEVISFYKQGDFTDLCAGPHVPSTGKVKSVKLLSLAGAYWRGNENNKMLQRIYGTAFTKKSELDEYLNMLEEAKKRDHRKLGKELDLFSIHEEGPGFPFFHPKGMIVRNILESFWREEHTKAGYQEIRTPLILNEALWHQSGHWDHYKENMYFTNIDDGDYAIKPMNCPGGILVYKNSMHSYRDLPLRLSELGIVHRHELSGALHGLMRVRCFTQDDAHLYMTKEQIKEEVVGIIKLIDKFYKLFGFEYFVELSTRPEDSMGSDEDWEIATNGLKEALDSIGKEYRVNEGDGAFYGPKIDFHLKDCIGRTWQCGTIQLDFQMPERFDLSYIGADGEKHRPVMVHRTIYGSVERFIGILIEQYAGAFPTWLAPVQVKLMNITDAQYDYLKKVEETLKENNIRVEIDTRNEKIGYKIREAQLQKVPYMLILGDKEVEAGKVAVRSRKDGDLGAISLEEFIEKIKNEIKAKTN.

In terms of domain architecture, TGS spans 1-61 (MIKITLKDGK…HKDSSLEILT (61 aa)). Residues 242–532 (DHRKLGKELD…LIEQYAGAFP (291 aa)) form a catalytic region. Residues C333, H384, and H509 each coordinate Zn(2+).

The protein belongs to the class-II aminoacyl-tRNA synthetase family. In terms of assembly, homodimer. Zn(2+) is required as a cofactor.

Its subcellular location is the cytoplasm. It catalyses the reaction tRNA(Thr) + L-threonine + ATP = L-threonyl-tRNA(Thr) + AMP + diphosphate + H(+). In terms of biological role, catalyzes the attachment of threonine to tRNA(Thr) in a two-step reaction: L-threonine is first activated by ATP to form Thr-AMP and then transferred to the acceptor end of tRNA(Thr). Also edits incorrectly charged L-seryl-tRNA(Thr). The chain is Threonine--tRNA ligase from Clostridium botulinum (strain Okra / Type B1).